The chain runs to 155 residues: Small ribosomal subunit protein uS7c (155 aa).

It belongs to the universal ribosomal protein uS7 family. Part of the 30S ribosomal subunit.

The protein resides in the plastid. The protein localises to the chloroplast. Its function is as follows. One of the primary rRNA binding proteins, it binds directly to 16S rRNA where it nucleates assembly of the head domain of the 30S subunit. The protein is Small ribosomal subunit protein uS7c (rps7) of Cabomba caroliniana (Carolina fanwort).